We begin with the raw amino-acid sequence, 220 residues long: tRNA (guanine-N(7)-)-methyltransferase (220 aa).

Glu44, Glu69, Asp96, and Asp118 together coordinate S-adenosyl-L-methionine. Asp118 is an active-site residue. Residue Lys122 participates in substrate binding. The tract at residues 124 to 129 (RHEKRR) is interaction with RNA. Residues Asp154 and 191 to 194 (TEYE) contribute to the substrate site.

This sequence belongs to the class I-like SAM-binding methyltransferase superfamily. TrmB family.

The enzyme catalyses guanosine(46) in tRNA + S-adenosyl-L-methionine = N(7)-methylguanosine(46) in tRNA + S-adenosyl-L-homocysteine. The protein operates within tRNA modification; N(7)-methylguanine-tRNA biosynthesis. Its function is as follows. Catalyzes the formation of N(7)-methylguanine at position 46 (m7G46) in tRNA. This Halalkalibacterium halodurans (strain ATCC BAA-125 / DSM 18197 / FERM 7344 / JCM 9153 / C-125) (Bacillus halodurans) protein is tRNA (guanine-N(7)-)-methyltransferase.